A 262-amino-acid polypeptide reads, in one-letter code: Lens fiber major intrinsic protein (262 aa).

The Cytoplasmic portion of the chain corresponds to 1–9 (MRELRSSSF). The helical transmembrane segment at 10 to 29 (WRAILAEFLGSLLYTLLGLG) threads the bilayer. Residues 30–41 (ASLRWAPGPHGV) lie on the Extracellular side of the membrane. A helical transmembrane segment spans residues 42–59 (LGSALAFGLAQATLVQAL). Residues 60–61 (GH) lie on the Cytoplasmic side of the membrane. An intramembrane region (discontinuously helical) is located at residues 62–77 (VSGGHINPAITLAFLL). Positions 68 to 70 (NPA) match the NPA 1 motif. The Cytoplasmic segment spans residues 78 to 82 (ASQLS). The chain crosses the membrane as a helical span at residues 83–106 (LPRALGYLLAQLLGALAGAGVLYG). Residues 107–127 (VTPAAVRGTLGLSALHPSVGP) lie on the Extracellular side of the membrane. A helical transmembrane segment spans residues 128–148 (GQGTVVELLLTAQFILCVFAS). The Cytoplasmic portion of the chain corresponds to 149 to 156 (FDDRHDGR). The chain crosses the membrane as a helical span at residues 157-175 (PGSAALPVGFSLALGHLFG). The Extracellular segment spans residues 176-178 (IPF). Residues 179–193 (TGAGMNPARSFAPAV) constitute an intramembrane region (discontinuously helical). Positions 184-186 (NPA) match the NPA 2 motif. At 194–200 (ITRNFTN) the chain is on the extracellular side. Residues 201–222 (HWVFWAGPLLGAALAALLYELA) form a helical membrane-spanning segment. The Cytoplasmic portion of the chain corresponds to 223 to 262 (LCPRARSMAERLAVLRGEPPAAAPPPEPPAEPLELKTQGL). Residues 227–237 (ARSMAERLAVL) form an interaction with CALM region. A disordered region spans residues 240–262 (EPPAAAPPPEPPAEPLELKTQGL). Residues 243 to 253 (AAAPPPEPPAE) show a composition bias toward pro residues.

It belongs to the MIP/aquaporin (TC 1.A.8) family. As to quaternary structure, homotetramer; each monomer provides an independent water pore. Two homotetramers on opposing membranes can dimerize, forming a cell-cell junction. Interacts with CALM; the calcium-calmodulin/CALM complex interacts with the cytoplasmic domains of two aquaporins, leading to channel closure. During early stages of lens development, interacts through its C-terminal region with Cx56 and GJA8/Cx45.6. Major component of lens fiber gap junctions.

The protein resides in the cell membrane. It is found in the cell junction. The enzyme catalyses H2O(in) = H2O(out). The water channel activity is inhibited by calcium through calmodulin/CALM. Aquaporins form homotetrameric transmembrane channels, with each monomer independently mediating water transport across the plasma membrane along its osmotic gradient. Specifically expressed in lens fiber cells, this aquaporin is crucial for maintaining lens water homeostasis and transparency. Beyond water permeability, it also acts as a cell-to-cell adhesion molecule, forming thin junctions between lens fiber cells that are essential for maintaining the ordered structure and transparency of the lens. The sequence is that of Lens fiber major intrinsic protein from Gallus gallus (Chicken).